Here is a 210-residue protein sequence, read N- to C-terminus: Na(+)-translocating NADH-quinone reductase subunit D (210 aa).

6 consecutive transmembrane segments (helical) span residues Ile-11–Ala-31, Phe-42–Ile-62, Val-70–Leu-90, Val-103–Met-123, Phe-131–Phe-151, and Asn-178–Ile-198.

Belongs to the NqrDE/RnfAE family. Composed of six subunits; NqrA, NqrB, NqrC, NqrD, NqrE and NqrF.

It localises to the cell inner membrane. It catalyses the reaction a ubiquinone + n Na(+)(in) + NADH + H(+) = a ubiquinol + n Na(+)(out) + NAD(+). Its function is as follows. NQR complex catalyzes the reduction of ubiquinone-1 to ubiquinol by two successive reactions, coupled with the transport of Na(+) ions from the cytoplasm to the periplasm. NqrA to NqrE are probably involved in the second step, the conversion of ubisemiquinone to ubiquinol. The sequence is that of Na(+)-translocating NADH-quinone reductase subunit D from Vibrio anguillarum (Listonella anguillarum).